The sequence spans 162 residues: uncharacterized protein (162 aa).

This is an uncharacterized protein from Methanocaldococcus jannaschii (strain ATCC 43067 / DSM 2661 / JAL-1 / JCM 10045 / NBRC 100440) (Methanococcus jannaschii).